The chain runs to 426 residues: Enolase (426 aa).

Residue Q163 coordinates (2R)-2-phosphoglycerate. The active-site Proton donor is the E205. Residues D242, E283, and D310 each contribute to the Mg(2+) site. The (2R)-2-phosphoglycerate site is built by K335, R364, S365, and K386. K335 functions as the Proton acceptor in the catalytic mechanism.

Belongs to the enolase family. Mg(2+) is required as a cofactor.

It is found in the cytoplasm. The protein localises to the secreted. Its subcellular location is the cell surface. It carries out the reaction (2R)-2-phosphoglycerate = phosphoenolpyruvate + H2O. The protein operates within carbohydrate degradation; glycolysis; pyruvate from D-glyceraldehyde 3-phosphate: step 4/5. Its function is as follows. Catalyzes the reversible conversion of 2-phosphoglycerate (2-PG) into phosphoenolpyruvate (PEP). It is essential for the degradation of carbohydrates via glycolysis. In Paenarthrobacter aurescens (strain TC1), this protein is Enolase.